Here is a 276-residue protein sequence, read N- to C-terminus: UDP-3-O-acyl-N-acetylglucosamine deacetylase (276 aa).

Zn(2+) contacts are provided by His76, His234, and Asp238. His261 functions as the Proton donor in the catalytic mechanism.

Belongs to the LpxC family. It depends on Zn(2+) as a cofactor.

It carries out the reaction a UDP-3-O-[(3R)-3-hydroxyacyl]-N-acetyl-alpha-D-glucosamine + H2O = a UDP-3-O-[(3R)-3-hydroxyacyl]-alpha-D-glucosamine + acetate. The protein operates within glycolipid biosynthesis; lipid IV(A) biosynthesis; lipid IV(A) from (3R)-3-hydroxytetradecanoyl-[acyl-carrier-protein] and UDP-N-acetyl-alpha-D-glucosamine: step 2/6. In terms of biological role, catalyzes the hydrolysis of UDP-3-O-myristoyl-N-acetylglucosamine to form UDP-3-O-myristoylglucosamine and acetate, the committed step in lipid A biosynthesis. The protein is UDP-3-O-acyl-N-acetylglucosamine deacetylase of Synechocystis sp. (strain ATCC 27184 / PCC 6803 / Kazusa).